Here is a 45-residue protein sequence, read N- to C-terminus: Unknown protein from spots 23/28/205 of 2D-PAGE of thylakoid (45 aa).

It localises to the plastid. It is found in the chloroplast thylakoid. The sequence is that of Unknown protein from spots 23/28/205 of 2D-PAGE of thylakoid from Pisum sativum (Garden pea).